The chain runs to 122 residues: Small ribosomal subunit protein bS16 (122 aa).

A disordered region spans residues 87 to 122; sequence VGKAKQAEARKAGAKNVAKQAAEAKAEETPADNTEA.

The protein belongs to the bacterial ribosomal protein bS16 family.

The polypeptide is Small ribosomal subunit protein bS16 (Prochlorococcus marinus (strain MIT 9303)).